The chain runs to 431 residues: tRNA(Ile)-lysidine synthase (431 aa).

Residue 19–24 participates in ATP binding; that stretch reads STGIDS.

It belongs to the tRNA(Ile)-lysidine synthase family.

The protein localises to the cytoplasm. The enzyme catalyses cytidine(34) in tRNA(Ile2) + L-lysine + ATP = lysidine(34) in tRNA(Ile2) + AMP + diphosphate + H(+). Functionally, ligates lysine onto the cytidine present at position 34 of the AUA codon-specific tRNA(Ile) that contains the anticodon CAU, in an ATP-dependent manner. Cytidine is converted to lysidine, thus changing the amino acid specificity of the tRNA from methionine to isoleucine. The polypeptide is tRNA(Ile)-lysidine synthase (Staphylococcus aureus (strain MRSA252)).